The following is a 718-amino-acid chain: Tensin-4 (718 aa).

The signal sequence occupies residues 1 to 14 (MSSSLLTGGHVVSL). 2 disordered regions span residues 188–244 (RETR…GLRA) and 272–437 (LPHS…AKDM). The span at 192–207 (SSSNESLIFSGNQGRG) shows a compositional bias: polar residues. Residues 208 to 219 (SSPHTPSSLSNS) are compositionally biased toward low complexity. Phosphoserine is present on Ser-230. Positions 272-304 (LPHSSLSSYPPSSRSLGSPASSSSSLHSLDRGS) are enriched in low complexity. Polar residues-rich tracts occupy residues 306–316 (CVRSSDAQVPS), 337–349 (QASS…TNSM), 367–393 (PAQQ…QATK), and 405–415 (TSPSHLCQATK). Positions 451-558 (WFKPSITREQ…ALPCKLTIPQ (108 aa)) constitute an SH2 domain. The 127-residue stretch at 585–711 (CHTLYLTSVS…SQVISLVTAL (127 aa)) folds into the PTB domain.

The protein belongs to the PTEN phosphatase protein family. As to quaternary structure, interacts (via SH2 domain) with Rho GTPase-activating protein DLC1 (via C-terminus); the interaction is independent of DLC1 tyrosine phosphorylation. Interacts with integrin ITGB1; the interaction displaces tensin TNS3 from the ITGB1 cytoplasmic tail and promotes ITGB1 stability. Interacts (via SH2 domain) with E3 ubiquitin-protein ligase CBL (phosphorylated on 'Tyr-781'); the interaction is enhanced in the presence of EGF and reduces interaction of CBL with EGFR. Interacts (via SH2 domain) with receptor tyrosine kinase MET (when phosphorylated); the interaction increases MET protein stability.

It is found in the cell junction. The protein resides in the focal adhesion. Its subcellular location is the cytoplasm. The protein localises to the cytoskeleton. Functionally, promotes EGF-induced cell migration by displacing tensin TNS3 from the cytoplasmic tail of integrin ITGB1 which results in dissociation of TNS3 from focal adhesions, disassembly of actin stress fibers and initiation of cell migration. Suppresses ligand-induced degradation of EGFR by reducing EGFR ubiquitination in the presence of EGF. Increases MET protein stability by inhibiting MET endocytosis and subsequent lysosomal degradation which leads to increased cell survival, proliferation and migration. The chain is Tensin-4 (Tns4) from Rattus norvegicus (Rat).